Here is a 548-residue protein sequence, read N- to C-terminus: Probable malate:quinone oxidoreductase (548 aa).

It belongs to the MQO family. FAD is required as a cofactor.

It catalyses the reaction (S)-malate + a quinone = a quinol + oxaloacetate. The protein operates within carbohydrate metabolism; tricarboxylic acid cycle; oxaloacetate from (S)-malate (quinone route): step 1/1. The chain is Probable malate:quinone oxidoreductase from Escherichia coli (strain SE11).